The following is a 329-amino-acid chain: Diaminopimelate epimerase (329 aa).

Residues Asn-14 and Asn-73 each contribute to the substrate site. Cys-82 functions as the Proton donor in the catalytic mechanism. Substrate contacts are provided by residues 83–84, Asn-170, Asn-206, and 224–225; these read GN and ER. Cys-233 functions as the Proton acceptor in the catalytic mechanism. 234–235 provides a ligand contact to substrate; that stretch reads GT.

This sequence belongs to the diaminopimelate epimerase family. In terms of assembly, homodimer.

Its subcellular location is the cytoplasm. It catalyses the reaction (2S,6S)-2,6-diaminopimelate = meso-2,6-diaminopimelate. The protein operates within amino-acid biosynthesis; L-lysine biosynthesis via DAP pathway; DL-2,6-diaminopimelate from LL-2,6-diaminopimelate: step 1/1. Catalyzes the stereoinversion of LL-2,6-diaminopimelate (L,L-DAP) to meso-diaminopimelate (meso-DAP), a precursor of L-lysine and an essential component of the bacterial peptidoglycan. This chain is Diaminopimelate epimerase, found in Listeria monocytogenes serotype 4b (strain CLIP80459).